Reading from the N-terminus, the 103-residue chain is Small ubiquitin-related modifier 2 (103 aa).

One can recognise a Ubiquitin-like domain in the interval 15 to 92 (AHINLKVKGQ…IDAMLHQTGG (78 aa)). A Glycyl lysine isopeptide (Gly-Lys) (interchain with K-? in acceptor proteins) cross-link involves residue glycine 92.

This sequence belongs to the ubiquitin family. SUMO subfamily. Interacts with SAE2, SCE1, SIZ1 and MMS21. Interacts with HSFA2. Covalently attached to ABI5, FLD, GTE3, HSFA2 and ICE1.

It localises to the nucleus. The protein resides in the cytoplasm. In terms of biological role, ubiquitin-like protein which can be covalently attached to target lysines as a monomer. Does not seem to be involved in protein degradation and may function as an antagonist of ubiquitin in the degradation process. Required for the massive protein sumoylation in the nucleus induced by heat shock and controlled by SIZ1. This Arabidopsis thaliana (Mouse-ear cress) protein is Small ubiquitin-related modifier 2.